The following is a 336-amino-acid chain: Phenylalanine--tRNA ligase alpha subunit (336 aa).

Glu259 is a Mg(2+) binding site.

It belongs to the class-II aminoacyl-tRNA synthetase family. Phe-tRNA synthetase alpha subunit type 1 subfamily. Tetramer of two alpha and two beta subunits. Mg(2+) is required as a cofactor.

It is found in the cytoplasm. It carries out the reaction tRNA(Phe) + L-phenylalanine + ATP = L-phenylalanyl-tRNA(Phe) + AMP + diphosphate + H(+). The protein is Phenylalanine--tRNA ligase alpha subunit of Tropheryma whipplei (strain Twist) (Whipple's bacillus).